Reading from the N-terminus, the 72-residue chain is Translation initiation factor IF-1 (72 aa).

The S1-like domain occupies 1 to 72 (MSKEDMIEFS…TKGRITFRFK (72 aa)).

Belongs to the IF-1 family. In terms of assembly, component of the 30S ribosomal translation pre-initiation complex which assembles on the 30S ribosome in the order IF-2 and IF-3, IF-1 and N-formylmethionyl-tRNA(fMet); mRNA recruitment can occur at any time during PIC assembly.

The protein resides in the cytoplasm. Its function is as follows. One of the essential components for the initiation of protein synthesis. Stabilizes the binding of IF-2 and IF-3 on the 30S subunit to which N-formylmethionyl-tRNA(fMet) subsequently binds. Helps modulate mRNA selection, yielding the 30S pre-initiation complex (PIC). Upon addition of the 50S ribosomal subunit IF-1, IF-2 and IF-3 are released leaving the mature 70S translation initiation complex. The chain is Translation initiation factor IF-1 from Acidiphilium cryptum (strain JF-5).